The sequence spans 434 residues: Trigger factor (434 aa).

One can recognise a PPIase FKBP-type domain in the interval 163 to 248 (GDRVTIDFEG…LTKIEAQHLP (86 aa)).

Belongs to the FKBP-type PPIase family. Tig subfamily.

It is found in the cytoplasm. It catalyses the reaction [protein]-peptidylproline (omega=180) = [protein]-peptidylproline (omega=0). Its function is as follows. Involved in protein export. Acts as a chaperone by maintaining the newly synthesized protein in an open conformation. Functions as a peptidyl-prolyl cis-trans isomerase. The sequence is that of Trigger factor from Methylibium petroleiphilum (strain ATCC BAA-1232 / LMG 22953 / PM1).